The chain runs to 256 residues: DNA repair protein RecO (256 aa).

Belongs to the RecO family.

Involved in DNA repair and RecF pathway recombination. The protein is DNA repair protein RecO of Anaeromyxobacter sp. (strain Fw109-5).